Consider the following 333-residue polypeptide: Ribokinase (333 aa).

Substrate contacts are provided by residues 10–12, 38–42, and E149; these read NYD and GKGLN. ATP is bound by residues N193 and 248–253; that span reads TLGSRG. K(+)-binding residues include D277 and T279. 282 to 283 lines the ATP pocket; sequence GD. Residue D283 participates in substrate binding. D283 functions as the Proton acceptor in the catalytic mechanism. T313, R316, G318, and S322 together coordinate K(+).

Belongs to the carbohydrate kinase PfkB family. Ribokinase subfamily. As to quaternary structure, homodimer. Mg(2+) is required as a cofactor.

It localises to the cytoplasm. The protein localises to the nucleus. The catalysed reaction is D-ribose + ATP = D-ribose 5-phosphate + ADP + H(+). Its pathway is carbohydrate metabolism; D-ribose degradation; D-ribose 5-phosphate from beta-D-ribopyranose: step 2/2. With respect to regulation, activated by a monovalent cation that binds near, but not in, the active site. The most likely occupant of the site in vivo is potassium. Ion binding induces a conformational change that may alter substrate affinity. Functionally, catalyzes the phosphorylation of ribose at O-5 in a reaction requiring ATP and magnesium. The resulting D-ribose-5-phosphate can then be used either for sythesis of nucleotides, histidine, and tryptophan, or as a component of the pentose phosphate pathway. The chain is Ribokinase from Saccharomyces cerevisiae (strain ATCC 204508 / S288c) (Baker's yeast).